Reading from the N-terminus, the 891-residue chain is Dynein axonemal intermediate chain 3 (891 aa).

The span at 1–17 (MAPKQKKKTSRGKKRLK) shows a compositional bias: basic residues. The tract at residues 1-22 (MAPKQKKKTSRGKKRLKPVLAA) is disordered. WD repeat units follow at residues 395-435 (ESPD…DRIE), 477-533 (GHKK…PLTP), 670-709 (IHDG…GPLL), and 713-753 (CAPK…HEPA). A coiled-coil region spans residues 818 to 861 (LEYVEQRKKIREQEKKEMELEMAKKKVKTYQKSKEQMQAELKMD).

As to quaternary structure, interacts with ACTR2; this interaction reduces binding of the Arp2/3 complex to the VCA domain of nucleation promoting factors. Part of the multisubunit axonemal dynein complex formed at least of two heavy chains and a number of intermediate and light chains. Found in a associated with the catalytic heavy chain DNAH2, the intermediate chain DNAI4, and the light chain DYNLT1.

The protein resides in the cytoplasm. In terms of biological role, acts as a negative regulator of cell migration, invasion, and metastasis downstream of p53/TP53, through inhibition of Arp2/3 complex-mediated actin polymerization. Via its association with the multisubunit axonemal dynein complex, is potentially involved in the regulation of cilia function. May play a role in osteogenesis of dental tissue-derived mesenchymal stem cells. In Homo sapiens (Human), this protein is Dynein axonemal intermediate chain 3.